A 360-amino-acid chain; its full sequence is E3 ubiquitin-protein ligase HAKAI homolog (360 aa).

Residues 1–11 (MLQIRLRRDSP) show a composition bias toward basic and acidic residues. A disordered region spans residues 1-24 (MLQIRLRRDSPTETGNGARPSPTE). An RING-type zinc finger spans residues 72 to 107 (CVRCDFPIAIYGRLIPCDHAFCLECARSDSICYLCD). A C2H2-type zinc finger spans residues 123–148 (FICAAPHCLRSFLKKLDFEAHVHDLH). The segment at 156 to 360 (AEKEDGNQSD…QENRDGFGQE (205 aa)) is disordered. Polar residues-rich tracts occupy residues 163-179 (QSDV…SEST), 186-214 (SQLQ…QNYP), and 270-283 (YPTT…QFFN). Over residues 293–304 (ESGGSEQSSLLG) the composition is skewed to low complexity.

This sequence belongs to the Hakai family. Interacts with MTB and VIR. Associates with MTA, MTB, FIP37 and VIR to form the m6A writer complex which is essential for adenosine methylation at specific mRNA sequences.

The protein localises to the nucleus speckle. Its subcellular location is the nucleus. The protein resides in the nucleoplasm. It carries out the reaction S-ubiquitinyl-[E2 ubiquitin-conjugating enzyme]-L-cysteine + [acceptor protein]-L-lysine = [E2 ubiquitin-conjugating enzyme]-L-cysteine + N(6)-ubiquitinyl-[acceptor protein]-L-lysine.. Probable E3 ubiquitin-protein ligase which is a subunit of the N6-methyltransferase complex, a multiprotein complex that mediates N6-methyladenosine (m6A) methylation at the 5'-[AG]GAC-3' consensus sites of some mRNAs. Associates with MTA, MTB, FIP37 and VIR to form the m6A writer complex which is essential for adenosine methylation at specific mRNA sequences. N6-methyladenosine (m6A) plays a role in mRNA stability, processing, translation efficiency and editing. The protein is E3 ubiquitin-protein ligase HAKAI homolog of Arabidopsis thaliana (Mouse-ear cress).